A 117-amino-acid polypeptide reads, in one-letter code: Immunoglobulin heavy variable 5-10-1 (117 aa).

Residues 1-19 form the signal peptide; sequence MGSTAILALLLAVLQGVCA. The interval 20-44 is framework-1; it reads EVQLVQSGAEVKKPGESLRISCKGS. Positions 20–117 constitute an Ig-like domain; the sequence is EVQLVQSGAE…SDTAMYYCAR (98 aa). Residues cysteine 41 and cysteine 115 are joined by a disulfide bond. Residues 45 to 52 form a complementarity-determining-1 region; the sequence is GYSFTSYW. Residues 53–69 form a framework-2 region; it reads ISWVRQMPGKGLEWMGR. Residues 70–77 are complementarity-determining-2; it reads IDPSDSYT. A framework-3 region spans residues 78–115; it reads NYSPSFQGHVTISADKSISTAYLQWSSLKASDTAMYYC. Positions 116–117 are complementarity-determining-3; the sequence is AR.

Immunoglobulins are composed of two identical heavy chains and two identical light chains; disulfide-linked.

The protein localises to the secreted. The protein resides in the cell membrane. In terms of biological role, v region of the variable domain of immunoglobulin heavy chains that participates in the antigen recognition. Immunoglobulins, also known as antibodies, are membrane-bound or secreted glycoproteins produced by B lymphocytes. In the recognition phase of humoral immunity, the membrane-bound immunoglobulins serve as receptors which, upon binding of a specific antigen, trigger the clonal expansion and differentiation of B lymphocytes into immunoglobulins-secreting plasma cells. Secreted immunoglobulins mediate the effector phase of humoral immunity, which results in the elimination of bound antigens. The antigen binding site is formed by the variable domain of one heavy chain, together with that of its associated light chain. Thus, each immunoglobulin has two antigen binding sites with remarkable affinity for a particular antigen. The variable domains are assembled by a process called V-(D)-J rearrangement and can then be subjected to somatic hypermutations which, after exposure to antigen and selection, allow affinity maturation for a particular antigen. This chain is Immunoglobulin heavy variable 5-10-1, found in Homo sapiens (Human).